We begin with the raw amino-acid sequence, 200 residues long: Imidazole glycerol phosphate synthase subunit HisH (200 aa).

The Glutamine amidotransferase type-1 domain maps to 3 to 200 (EVALIDAGGA…LRNFLEMDAA (198 aa)). Residue Cys-78 is the Nucleophile of the active site. Catalysis depends on residues His-179 and Glu-181.

As to quaternary structure, heterodimer of HisH and HisF.

Its subcellular location is the cytoplasm. The catalysed reaction is 5-[(5-phospho-1-deoxy-D-ribulos-1-ylimino)methylamino]-1-(5-phospho-beta-D-ribosyl)imidazole-4-carboxamide + L-glutamine = D-erythro-1-(imidazol-4-yl)glycerol 3-phosphate + 5-amino-1-(5-phospho-beta-D-ribosyl)imidazole-4-carboxamide + L-glutamate + H(+). It catalyses the reaction L-glutamine + H2O = L-glutamate + NH4(+). It participates in amino-acid biosynthesis; L-histidine biosynthesis; L-histidine from 5-phospho-alpha-D-ribose 1-diphosphate: step 5/9. Its function is as follows. IGPS catalyzes the conversion of PRFAR and glutamine to IGP, AICAR and glutamate. The HisH subunit catalyzes the hydrolysis of glutamine to glutamate and ammonia as part of the synthesis of IGP and AICAR. The resulting ammonia molecule is channeled to the active site of HisF. In Xylella fastidiosa (strain Temecula1 / ATCC 700964), this protein is Imidazole glycerol phosphate synthase subunit HisH.